The primary structure comprises 277 residues: Glutamate racemase (277 aa).

Substrate is bound by residues 9–10 (DS) and 41–42 (YG). Catalysis depends on cysteine 73, which acts as the Proton donor/acceptor. 74 to 75 (NT) lines the substrate pocket. The Proton donor/acceptor role is filled by cysteine 183. 184 to 185 (TH) contacts substrate.

The protein belongs to the aspartate/glutamate racemases family.

It catalyses the reaction L-glutamate = D-glutamate. The protein operates within cell wall biogenesis; peptidoglycan biosynthesis. Its function is as follows. Provides the (R)-glutamate required for cell wall biosynthesis. The polypeptide is Glutamate racemase (Shewanella denitrificans (strain OS217 / ATCC BAA-1090 / DSM 15013)).